Reading from the N-terminus, the 274-residue chain is 4-hydroxy-3-methylbut-2-enyl diphosphate reductase (274 aa).

Cysteine 12 lines the [4Fe-4S] cluster pocket. 2 residues coordinate (2E)-4-hydroxy-3-methylbut-2-enyl diphosphate: histidine 36 and histidine 70. 2 residues coordinate dimethylallyl diphosphate: histidine 36 and histidine 70. Isopentenyl diphosphate contacts are provided by histidine 36 and histidine 70. Cysteine 92 is a binding site for [4Fe-4S] cluster. Histidine 120 contacts (2E)-4-hydroxy-3-methylbut-2-enyl diphosphate. Histidine 120 is a binding site for dimethylallyl diphosphate. An isopentenyl diphosphate-binding site is contributed by histidine 120. Glutamate 122 serves as the catalytic Proton donor. Position 158 (threonine 158) interacts with (2E)-4-hydroxy-3-methylbut-2-enyl diphosphate. Cysteine 186 is a binding site for [4Fe-4S] cluster. (2E)-4-hydroxy-3-methylbut-2-enyl diphosphate contacts are provided by serine 214, serine 215, asparagine 216, and serine 258. 4 residues coordinate dimethylallyl diphosphate: serine 214, serine 215, asparagine 216, and serine 258. The isopentenyl diphosphate site is built by serine 214, serine 215, asparagine 216, and serine 258.

This sequence belongs to the IspH family. Requires [4Fe-4S] cluster as cofactor.

It carries out the reaction isopentenyl diphosphate + 2 oxidized [2Fe-2S]-[ferredoxin] + H2O = (2E)-4-hydroxy-3-methylbut-2-enyl diphosphate + 2 reduced [2Fe-2S]-[ferredoxin] + 2 H(+). The enzyme catalyses dimethylallyl diphosphate + 2 oxidized [2Fe-2S]-[ferredoxin] + H2O = (2E)-4-hydroxy-3-methylbut-2-enyl diphosphate + 2 reduced [2Fe-2S]-[ferredoxin] + 2 H(+). It participates in isoprenoid biosynthesis; dimethylallyl diphosphate biosynthesis; dimethylallyl diphosphate from (2E)-4-hydroxy-3-methylbutenyl diphosphate: step 1/1. Its pathway is isoprenoid biosynthesis; isopentenyl diphosphate biosynthesis via DXP pathway; isopentenyl diphosphate from 1-deoxy-D-xylulose 5-phosphate: step 6/6. Functionally, catalyzes the conversion of 1-hydroxy-2-methyl-2-(E)-butenyl 4-diphosphate (HMBPP) into a mixture of isopentenyl diphosphate (IPP) and dimethylallyl diphosphate (DMAPP). Acts in the terminal step of the DOXP/MEP pathway for isoprenoid precursor biosynthesis. The polypeptide is 4-hydroxy-3-methylbut-2-enyl diphosphate reductase (Campylobacter concisus (strain 13826)).